The primary structure comprises 466 residues: Asparagine--tRNA ligase (466 aa).

Belongs to the class-II aminoacyl-tRNA synthetase family. In terms of assembly, homodimer.

The protein resides in the cytoplasm. The catalysed reaction is tRNA(Asn) + L-asparagine + ATP = L-asparaginyl-tRNA(Asn) + AMP + diphosphate + H(+). The sequence is that of Asparagine--tRNA ligase from Shewanella amazonensis (strain ATCC BAA-1098 / SB2B).